Here is a 212-residue protein sequence, read N- to C-terminus: uncharacterized protein (212 aa).

Residues 11–31 (NLIFFQFIVYFFFISLTILII) traverse the membrane as a helical segment.

Its subcellular location is the membrane. This is an uncharacterized protein from Rickettsia prowazekii (strain Madrid E).